Reading from the N-terminus, the 306-residue chain is MAFLEVSVQCQGRSQARYEEVLESFGALAVTLLDADADTVRERGVFEPGVGETVLWDVVVLSALFPVETDALGLLAGLEGAEPGLDWGGVRFRVVVDEDWERVWMDQFQPMRFGERTFIVPWNQAVPVEASGMDAAVVRLDPGLAFGSGTHPTTGLCLRWLDRLGGDGVLGGGEVLDFGCGSGILALAALKLGAVYAVGVDNDPQALLASRENALRNGVAERLEVYLPAEAPVRRYPVVVANILASTLVALAERLAGCVAPGGRLALSGILRGEEKEVLRCYAVWLDVLGCEEEDGWIRIDGVRRC.

S-adenosyl-L-methionine-binding residues include T154, G179, D201, and N242.

The protein belongs to the methyltransferase superfamily. PrmA family.

The protein localises to the cytoplasm. The enzyme catalyses L-lysyl-[protein] + 3 S-adenosyl-L-methionine = N(6),N(6),N(6)-trimethyl-L-lysyl-[protein] + 3 S-adenosyl-L-homocysteine + 3 H(+). Its function is as follows. Methylates ribosomal protein L11. The chain is Ribosomal protein L11 methyltransferase from Xylella fastidiosa (strain 9a5c).